The primary structure comprises 453 residues: Aldehyde dehydrogenase, dimeric NADP-preferring (453 aa).

At Ser-2 the chain carries N-acetylserine. An N6-acetyllysine modification is found at Lys-178. 188–193 (GSTAVG) lines the NAD(+) pocket. Lys-194 carries the N6-acetyllysine modification. Residues Glu-210 and Cys-244 contribute to the active site.

Belongs to the aldehyde dehydrogenase family. In terms of assembly, homodimer.

It localises to the cytoplasm. It catalyses the reaction an aldehyde + NAD(+) + H2O = a carboxylate + NADH + 2 H(+). The enzyme catalyses octanal + NAD(+) + H2O = octanoate + NADH + 2 H(+). ALDHs play a major role in the detoxification of alcohol-derived acetaldehyde. They are involved in the metabolism of corticosteroids, biogenic amines, neurotransmitters, and lipid peroxidation. Oxidizes medium and long chain aldehydes into non-toxic fatty acids. Preferentially oxidizes aromatic aldehyde substrates. Comprises about 50 percent of corneal epithelial soluble proteins. May play a role in preventing corneal damage caused by ultraviolet light. This chain is Aldehyde dehydrogenase, dimeric NADP-preferring (Aldh3a1), found in Rattus norvegicus (Rat).